The primary structure comprises 454 residues: Mitochondrial dynamics protein MID49 (454 aa).

Over 1-22 the chain is Mitochondrial intermembrane; the sequence is MAEFSQKQRKQSGSEGLGSVVD. The helical transmembrane segment at 23–43 threads the bilayer; it reads FLLANARLVLGVGGAAVLGIA. Over 44-454 the chain is Cytoplasmic; sequence TLAVKRLIDR…SGLQVPESLF (411 aa). The interval 76–113 is disordered; the sequence is ATSPQKPQPPPAAFSQPLATGSPSPSVPVEPTPIHSPT.

Belongs to the MID49/MID51 family. In terms of assembly, interacts with DNM1L.

It is found in the mitochondrion outer membrane. In terms of biological role, mitochondrial outer membrane protein which regulates mitochondrial organization. It is required for mitochondrial fission and promotes the recruitment and association of the fission mediator dynamin-related protein 1 (DNM1L) to the mitochondrial surface independently of the mitochondrial fission FIS1 and MFF proteins. Regulates DNM1L GTPase activity. The polypeptide is Mitochondrial dynamics protein MID49 (Mief2) (Mus musculus (Mouse)).